The sequence spans 149 residues: Cyanate hydratase (149 aa).

Residues arginine 90, glutamate 93, and serine 116 contribute to the active site.

The protein belongs to the cyanase family.

It carries out the reaction cyanate + hydrogencarbonate + 3 H(+) = NH4(+) + 2 CO2. In terms of biological role, catalyzes the reaction of cyanate with bicarbonate to produce ammonia and carbon dioxide. This is Cyanate hydratase from Synechocystis sp. (strain ATCC 27184 / PCC 6803 / Kazusa).